The sequence spans 828 residues: Protein SEY1 homolog (828 aa).

Over 1–718 (MTEDVMNDDF…SSKNGISWKN (718 aa)) the chain is Cytoplasmic. The GB1/RHD3-type G domain occupies 44 to 284 (GFNYNVLSIL…VPSDGFFYYA (241 aa)). 54 to 61 (GCQSSGKS) lines the GTP pocket. Residues 719–739 (IPPPFWILLLLCSWNELCSVL) traverse the membrane as a helical segment. Topologically, residues 740–742 (RIV) are lumenal. Residues 743–763 (FKVQVLIPLIILGFIVVQYFS) traverse the membrane as a helical segment. At 764 to 828 (HLVFGTSADA…NDSGKKAEEN (65 aa)) the chain is on the cytoplasmic side.

This sequence belongs to the TRAFAC class dynamin-like GTPase superfamily. GB1/RHD3 GTPase family. RHD3 subfamily.

The protein localises to the endoplasmic reticulum membrane. In terms of biological role, probable GTP-binding protein that may be involved in cell development. This chain is Protein SEY1 homolog, found in Babesia bovis.